A 319-amino-acid chain; its full sequence is Ubiquinone biosynthesis protein COQ9, mitochondrial (319 aa).

A mitochondrion-targeting transit peptide spans 1–45; sequence MAATVAFSGVLRRAGWRLLQLRCLPVPRCRPALAPRAFRASAMQL. Positions 17 to 32 match the SIFI-degron motif; sequence RLLQLRCLPVPRCRPA. The segment at 46 to 99 is disordered; that stretch reads RSLDQQKDQPPPSSSQQQSEAQGAEEPNPEALRSPPRYTDQGGEEEEDYESEEQ. A compositionally biased stretch (acidic residues) spans 87–98; the sequence is GGEEEEDYESEE. The residue at position 176 (Lys176) is an N6-acetyllysine. Arg245 serves as a coordination point for a 1,2-diacylglycero-3-phosphoethanolamine.

It belongs to the COQ9 family. In terms of assembly, homodimer. Heterodimer; two heterodimers of COQ7:COQ9 come together on the same side of the lipid pseudo-bilayer and form a curved tetramer with a hydrophobic surface suitable for membrane interaction. These two tetramers assemble into a soluble octamer with a pseudo-bilayer of lipids captured within. Interacts with COQ7; this interaction allows ubiquinone (CoQ) isoprene intermediates presentation to COQ7 and facilitates the COQ7-mediated hydroxylase step. In terms of processing, in response to mitochondrial stress, the precursor protein is ubiquitinated by the SIFI complex in the cytoplasm before mitochondrial import, leading to its degradation. Within the SIFI complex, UBR4 initiates ubiquitin chain that are further elongated or branched by KCMF1.

Its subcellular location is the mitochondrion. Its pathway is cofactor biosynthesis; ubiquinone biosynthesis. Membrane-associated protein that warps the membrane surface to access and bind aromatic isoprenes with high specificity, including ubiquinone (CoQ) isoprene intermediates and presents them directly to COQ7, therefore facilitating the COQ7-mediated hydroxylase step. Participates in the biosynthesis of coenzyme Q, also named ubiquinone, an essential lipid-soluble electron transporter for aerobic cellular respiration. In Bos taurus (Bovine), this protein is Ubiquinone biosynthesis protein COQ9, mitochondrial.